The chain runs to 181 residues: Translation initiation factor IF-3 (181 aa).

This sequence belongs to the IF-3 family. Monomer.

It is found in the cytoplasm. Its function is as follows. IF-3 binds to the 30S ribosomal subunit and shifts the equilibrium between 70S ribosomes and their 50S and 30S subunits in favor of the free subunits, thus enhancing the availability of 30S subunits on which protein synthesis initiation begins. This chain is Translation initiation factor IF-3, found in Pseudoalteromonas translucida (strain TAC 125).